Reading from the N-terminus, the 1014-residue chain is Isoleucine--tRNA ligase (1014 aa).

A 'HIGH' region motif is present at residues 48–58 (PTANGRPGIHH). A 'KMSKS' region motif is present at residues 628–632 (KMSKS). K631 contributes to the ATP binding site.

This sequence belongs to the class-I aminoacyl-tRNA synthetase family. IleS type 2 subfamily. In terms of assembly, monomer. Zn(2+) serves as cofactor.

The protein resides in the cytoplasm. It carries out the reaction tRNA(Ile) + L-isoleucine + ATP = L-isoleucyl-tRNA(Ile) + AMP + diphosphate. Functionally, catalyzes the attachment of isoleucine to tRNA(Ile). As IleRS can inadvertently accommodate and process structurally similar amino acids such as valine, to avoid such errors it has two additional distinct tRNA(Ile)-dependent editing activities. One activity is designated as 'pretransfer' editing and involves the hydrolysis of activated Val-AMP. The other activity is designated 'posttransfer' editing and involves deacylation of mischarged Val-tRNA(Ile). The protein is Isoleucine--tRNA ligase of Dehalococcoides mccartyi (strain CBDB1).